A 217-amino-acid polypeptide reads, in one-letter code: Probable GTP-binding protein EngB (217 aa).

In terms of domain architecture, EngB-type G spans 27 to 201; sequence GGVEIAFAGR…AQTLSGWYLA (175 aa). GTP contacts are provided by residues 35–42, 62–66, 80–83, 147–150, and 180–182; these read GRSNAGKS, GRTQL, DLPG, TKAD, and FSS. S42 and T64 together coordinate Mg(2+).

This sequence belongs to the TRAFAC class TrmE-Era-EngA-EngB-Septin-like GTPase superfamily. EngB GTPase family. Requires Mg(2+) as cofactor.

In terms of biological role, necessary for normal cell division and for the maintenance of normal septation. The protein is Probable GTP-binding protein EngB of Aeromonas salmonicida (strain A449).